A 360-amino-acid chain; its full sequence is LETM1 domain-containing protein 1 (360 aa).

Residues 1–110 are required and sufficient for mitochondrial import; it reads MALSRVCWAR…KKARRIKTNM (110 aa). The Cytoplasmic portion of the chain corresponds to 1–137; it reads MALSRVCWAR…LRQFRQDVTK (137 aa). Residues 138-158 traverse the membrane as a helical segment; it reads CLFLGIISIPPFANYLVFLLM. Topologically, residues 159 to 360 are mitochondrial intermembrane; that stretch reads YLFPRQLLIR…LSTNYLGTRR (202 aa). The Letm1 RBD domain maps to 186–360; it reads FRKQSHPEII…LSTNYLGTRR (175 aa).

As to quaternary structure, interacts with BRI3BP. Interacts (via C-terminal) with SMARCA4; the interaction regulates transcriptional expression of thermogenic genes in brown adipose tissue. In terms of tissue distribution, kidney, liver, skeletal muscle, heart and brain. Overexpressed in various tumors including leukemia, lymphoma, and carcinomas of the breast, kidney, ovary, stomach, colon and uterine cervix.

It is found in the mitochondrion outer membrane. The protein resides in the nucleus. Its subcellular location is the mitochondrion inner membrane. In terms of biological role, plays an essential role for mitochondrial structure and function, as well as thermogenesis of brown adipocytes. In brown adipose tissue also localizes in the nucleus where it interacts with the chromatin remodeler SMARCA4 to regulate thermogenic genes expression, such as UCP1. May regulate phagocytosis and inflammatory responses to lipopolysaccharide in macrophages. Involved in tumorigenesis and may function as a negative regulator of the p53/TP53. The chain is LETM1 domain-containing protein 1 from Homo sapiens (Human).